The sequence spans 847 residues: Protein IRS1 (847 aa).

Disordered regions lie at residues 1-82 (MAQR…NFWH), 607-627 (WLME…ATMP), and 715-847 (QVIP…HVHH). Positions 16-25 (RGRGAGGPSG) are enriched in gly residues. Positions 26–56 (VGSSPPSSCVPMGATSTAGTGASAAPTATPG) are enriched in low complexity. Positions 723–733 (EPEDDDEDPTY) are enriched in acidic residues. Residues 833 to 847 (RPKKCQTHAPHHVHH) are compositionally biased toward basic residues.

This sequence belongs to the herpesviridae US22 family. As to quaternary structure, interacts (via N-terminus) with the viral DNA polymerase accessory subunit UL44. Interacts (via C-terminus) with host EIF2AK2.

The protein resides in the virion. It localises to the host cytoplasm. Its subcellular location is the host nucleus. Acts as a transactivator along with IE2, and is required for oriLyt-dependent DNA replication in the transient transfection replication assay using native promoters. This is Protein IRS1 (IRS1) from Human cytomegalovirus (strain Merlin) (HHV-5).